A 182-amino-acid polypeptide reads, in one-letter code: Putative manganese efflux pump MntP (182 aa).

6 consecutive transmembrane segments (helical) span residues 6–26, 37–57, 71–91, 101–121, 131–151, and 162–182; these read LIPL…VSLG, ILYI…IGMV, HFAG…SSIL, IGIS…SVGL, IITI…GLFI, and YGEI…LFPI.

The protein belongs to the MntP (TC 9.B.29) family.

The protein localises to the cell membrane. Functionally, probably functions as a manganese efflux pump. The protein is Putative manganese efflux pump MntP of Bacillus thuringiensis subsp. konkukian (strain 97-27).